The primary structure comprises 806 residues: Protein bimA (806 aa).

TPR repeat units lie at residues Leu76–Arg109 and Ala127–Met160. 3 disordered regions span residues Val202 to Gly348, Thr353 to Gly372, and Arg401 to Lys460. The span at Ala224–Ser237 shows a compositional bias: polar residues. Residues Gly246–Gly257 are compositionally biased toward low complexity. A bimA domain region spans residues Leu260–Glu399. Basic and acidic residues predominate over residues Thr328–Gly348. A compositionally biased stretch (polar residues) spans Thr408–Val421. Residues His432–Arg445 are compositionally biased toward basic and acidic residues. The span at Gly446–Ser459 shows a compositional bias: low complexity. TPR repeat units follow at residues Pro513–Arg546, Pro581–Phe614, Tyr616–His648, Tyr649–Asn682, Val684–Ser716, and Ala751–Ala784.

Belongs to the APC3/CDC27 family.

The protein resides in the nucleus. In terms of biological role, required for the completion of mitosis in Aspergillus nidulans. The protein is Protein bimA (bimA) of Emericella nidulans (strain FGSC A4 / ATCC 38163 / CBS 112.46 / NRRL 194 / M139) (Aspergillus nidulans).